The primary structure comprises 200 residues: Dephospho-CoA kinase (200 aa).

Positions 3–200 (VLGLTGSIGM…LSGKPAAATR (198 aa)) constitute a DPCK domain. Residue 11–16 (GMGKTT) coordinates ATP.

Belongs to the CoaE family.

The protein localises to the cytoplasm. It carries out the reaction 3'-dephospho-CoA + ATP = ADP + CoA + H(+). It functions in the pathway cofactor biosynthesis; coenzyme A biosynthesis; CoA from (R)-pantothenate: step 5/5. Its function is as follows. Catalyzes the phosphorylation of the 3'-hydroxyl group of dephosphocoenzyme A to form coenzyme A. The chain is Dephospho-CoA kinase from Brucella melitensis biotype 1 (strain ATCC 23456 / CCUG 17765 / NCTC 10094 / 16M).